The primary structure comprises 460 residues: UDP-N-acetylmuramate--L-alanine ligase (460 aa).

Position 118–124 (118–124 (GAHGKTT)) interacts with ATP.

This sequence belongs to the MurCDEF family.

It is found in the cytoplasm. It catalyses the reaction UDP-N-acetyl-alpha-D-muramate + L-alanine + ATP = UDP-N-acetyl-alpha-D-muramoyl-L-alanine + ADP + phosphate + H(+). The protein operates within cell wall biogenesis; peptidoglycan biosynthesis. Cell wall formation. The sequence is that of UDP-N-acetylmuramate--L-alanine ligase from Clostridium botulinum (strain Eklund 17B / Type B).